An 81-amino-acid chain; its full sequence is Arminin 2a (81 aa).

An N-terminal signal peptide occupies residues 1-18; sequence MKTVFAILFLAFIALTYA. Positions 19 to 57 are excised as a propeptide; it reads RSYEDVKEEIKNEVVKEILEDLEEESDELDDKSKEINDA. At Ala78 the chain carries Alanine amide.

Belongs to the arminin family. In terms of tissue distribution, expressed in entodermal epithelium along the body column.

It is found in the secreted. It localises to the target cell membrane. Its function is as follows. Antimicrobial peptide with a broad-spectrum antimicrobial activity. Keeps its antibacterial activity under a wide range of salt concentrations that mimic physiological conditions of human blood, which is surprising, since Hydra is an obligate freshwater animal with nearly no salt tolerance. Does not affect red blood cells. This Hydra vulgaris (Hydra) protein is Arminin 2a.